Here is a 546-residue protein sequence, read N- to C-terminus: Arginine--tRNA ligase (546 aa).

The short motif at 122–132 is the 'HIGH' region element; sequence ANPTGPFTVGH.

It belongs to the class-I aminoacyl-tRNA synthetase family. Monomer.

Its subcellular location is the cytoplasm. It catalyses the reaction tRNA(Arg) + L-arginine + ATP = L-arginyl-tRNA(Arg) + AMP + diphosphate. The protein is Arginine--tRNA ligase (argS) of Thermotoga maritima (strain ATCC 43589 / DSM 3109 / JCM 10099 / NBRC 100826 / MSB8).